Consider the following 265-residue polypeptide: Flavin-dependent thymidylate synthase (265 aa).

Residues 11–224 enclose the ThyX domain; that stretch reads GFLKLIDFMG…PIAFNSFENH (214 aa). FAD-binding positions include Ser56, 79-81, and Glu87; that span reads RHR. 76 to 79 is a binding site for dUMP; that stretch reads QWMR. The ThyX motif signature appears at 79–89; the sequence is RHRTARINEVS. Position 155 (Arg155) interacts with dUMP. FAD-binding positions include 171 to 173 and His177; that span reads DLN. Residue Arg182 coordinates dUMP. Arg182 serves as the catalytic Involved in ionization of N3 of dUMP, leading to its activation.

It belongs to the thymidylate synthase ThyX family. In terms of assembly, homotetramer. It depends on FAD as a cofactor.

It catalyses the reaction dUMP + (6R)-5,10-methylene-5,6,7,8-tetrahydrofolate + NADPH + H(+) = dTMP + (6S)-5,6,7,8-tetrahydrofolate + NADP(+). It functions in the pathway pyrimidine metabolism; dTTP biosynthesis. Its function is as follows. Catalyzes the reductive methylation of 2'-deoxyuridine-5'-monophosphate (dUMP) to 2'-deoxythymidine-5'-monophosphate (dTMP) while utilizing 5,10-methylenetetrahydrofolate (mTHF) as the methyl donor, and NADPH and FADH(2) as the reductant. The protein is Flavin-dependent thymidylate synthase of Borreliella burgdorferi (strain ATCC 35210 / DSM 4680 / CIP 102532 / B31) (Borrelia burgdorferi).